Here is a 407-residue protein sequence, read N- to C-terminus: Na(+)-translocating NADH-quinone reductase subunit F (407 aa).

Residues 3-23 (IILGVVMFTLIVLVLSGLILA) form a helical membrane-spanning segment. A 2Fe-2S ferredoxin-type domain is found at 32–126 (GDVVIEINNE…NMKIELPEEI (95 aa)). [2Fe-2S] cluster-binding residues include C69, C75, C78, and C110. An FAD-binding FR-type domain is found at 129–269 (VKKWECEVIS…SGPFGEFFAK (141 aa)).

Belongs to the NqrF family. As to quaternary structure, composed of six subunits; NqrA, NqrB, NqrC, NqrD, NqrE and NqrF. The cofactor is [2Fe-2S] cluster. It depends on FAD as a cofactor.

Its subcellular location is the cell inner membrane. It carries out the reaction a ubiquinone + n Na(+)(in) + NADH + H(+) = a ubiquinol + n Na(+)(out) + NAD(+). NQR complex catalyzes the reduction of ubiquinone-1 to ubiquinol by two successive reactions, coupled with the transport of Na(+) ions from the cytoplasm to the periplasm. The first step is catalyzed by NqrF, which accepts electrons from NADH and reduces ubiquinone-1 to ubisemiquinone by a one-electron transfer pathway. The protein is Na(+)-translocating NADH-quinone reductase subunit F of Klebsiella pneumoniae subsp. pneumoniae (strain ATCC 700721 / MGH 78578).